The chain runs to 93 residues: MKKLVLLSALVLLALQVEAEPTPKTDEGTKTDEQPGKEDQVVSVSIEGQGDPAFQDAVLRDLKCFCRRKSCNWGEGIMGICKKRYGSPILCCR.

Residues 1–19 form the signal peptide; that stretch reads MKKLVLLSALVLLALQVEA. A propeptide spanning residues 20–58 is cleaved from the precursor; the sequence is EPTPKTDEGTKTDEQPGKEDQVVSVSIEGQGDPAFQDAV. 3 disulfides stabilise this stretch: Cys64-Cys92, Cys66-Cys81, and Cys71-Cys91.

Belongs to the alpha-defensin family. In terms of tissue distribution, small intestine. Not present in heart, liver, spleen, kidney, large intestine and colon.

The protein resides in the secreted. Probably contributes to the antimicrobial barrier function of the small intestine. This is Defensin 5 from Rattus norvegicus (Rat).